The following is a 1015-amino-acid chain: Frequency clock protein (1015 aa).

Disordered stretches follow at residues 1–138 (MQPT…SADD), 183–285 (KRKK…QKVD), 352–383 (DFSPQQQQQQQQQQQQQPKSNFITNPGATFSS), 402–465 (HVAG…DPDR), 544–614 (GRKI…VSAS), 629–668 (SPNEQSSMEDGTLSSFGPIEESNADSRWGQSGSGASNRRK), 706–728 (ERPDAQGQFARPLPFRSGSGSSI), and 895–1015 (SEDD…SSQG). Over residues 49-68 (SAPPNDSNENSSSPRRASSG) the composition is skewed to low complexity. Over residues 69–80 (ESHETGQSDAKK) the composition is skewed to basic and acidic residues. Polar residues predominate over residues 82–95 (FNQSNQNPTATFDS). A compositionally biased stretch (basic and acidic residues) spans 107-117 (KESDSSNEDKP). Composition is skewed to low complexity over residues 203 to 216 (SPNTSSSKRNSTTK), 228 to 267 (SGSGSKSQSKHASSSSGSHTRPVDSAYASMSTGAGSSGTS), and 356 to 368 (QQQQQQQQQQQQQ). Residues 369-383 (PKSNFITNPGATFSS) show a composition bias toward polar residues. Over residues 431 to 442 (NSSSNGNDSGTN) the composition is skewed to low complexity. Over residues 443 to 453 (PSPPMPPPPEQ) the composition is skewed to pro residues. A compositionally biased stretch (basic and acidic residues) spans 454 to 465 (RPTRPRDLDPDR). The segment covering 556–570 (TKFSSESSGDLSQRS) has biased composition (polar residues). The Nuclear localization signal signature appears at 584-588 (HKRQK). The segment covering 590-600 (GHSTGDSGSSG) has biased composition (low complexity). A compositionally biased stretch (polar residues) spans 629 to 643 (SPNEQSSMEDGTLSS). Composition is skewed to acidic residues over residues 895-909 (SEDDFGSDGDDEFNS) and 934-946 (SGDEDGEEPEDDI). Positions 976–1003 (GSSRGRSNSASAEAVLRAGGSSAATAGG) are enriched in low complexity.

This sequence belongs to the FRQ family.

The protein localises to the nucleus. In terms of biological role, circadian clock component involved in the generation of biological rhythms, in particular in rhythm stability, period length, and temperature compensation. Behaves as a negative element in circadian transcriptional loop. The protein is Frequency clock protein (FRQ) of Trichoderma spinulosum (Hypocrea spinulosa).